The primary structure comprises 315 residues: Shiga toxin subunit A (315 aa).

An N-terminal signal peptide occupies residues 1–22; that stretch reads MKIIIFRVLTFFFVIFSVNVVA. The A1 stretch occupies residues 23–273; the sequence is KEFTLDFSTA…CHHHASRVAR (251 aa). Residue Glu-189 is part of the active site. A disulfide bridge connects residues Cys-264 and Cys-283. The interval 274–315 is A2; it reads MASDEFPSMCPADGRVRGITHNKILWDSSTLGAILMRRTISS.

Belongs to the ribosome-inactivating protein family. In terms of assembly, shiga toxin contains a single subunit A and five copies of subunit B.

It carries out the reaction Endohydrolysis of the N-glycosidic bond at one specific adenosine on the 28S rRNA.. The A subunit is responsible for inhibiting protein synthesis through the catalytic inactivation of 60S ribosomal subunits. After endocytosis, the A subunit is cleaved by furin in two fragments, A1 and A2: A1 is the catalytically active fragment, and A2 is essential for holotoxin assembly with the B subunits. This Shigella sonnei (Shigella sonnei bacteriophage 7888) protein is Shiga toxin subunit A (stxA).